A 210-amino-acid polypeptide reads, in one-letter code: Holliday junction branch migration complex subunit RuvA (210 aa).

The tract at residues 1–70 (MISYLKGNPI…DEQPILYGFA (70 aa)) is domain I. The interval 71–149 (TAAERELFRQ…QWRKLVGITL (79 aa)) is domain II. Residues 150-160 (PSTSAIPSLEV) are flexible linker. The tract at residues 160 to 210 (VLEDVEMTLLALGYTNEEINKAISTLSQDNQMLKNTNSEEWIREAIAWLSQ) is domain III.

The protein belongs to the RuvA family. As to quaternary structure, homotetramer. Forms an RuvA(8)-RuvB(12)-Holliday junction (HJ) complex. HJ DNA is sandwiched between 2 RuvA tetramers; dsDNA enters through RuvA and exits via RuvB. An RuvB hexamer assembles on each DNA strand where it exits the tetramer. Each RuvB hexamer is contacted by two RuvA subunits (via domain III) on 2 adjacent RuvB subunits; this complex drives branch migration. In the full resolvosome a probable DNA-RuvA(4)-RuvB(12)-RuvC(2) complex forms which resolves the HJ.

It localises to the cytoplasm. Its function is as follows. The RuvA-RuvB-RuvC complex processes Holliday junction (HJ) DNA during genetic recombination and DNA repair, while the RuvA-RuvB complex plays an important role in the rescue of blocked DNA replication forks via replication fork reversal (RFR). RuvA specifically binds to HJ cruciform DNA, conferring on it an open structure. The RuvB hexamer acts as an ATP-dependent pump, pulling dsDNA into and through the RuvAB complex. HJ branch migration allows RuvC to scan DNA until it finds its consensus sequence, where it cleaves and resolves the cruciform DNA. The chain is Holliday junction branch migration complex subunit RuvA from Rippkaea orientalis (strain PCC 8801 / RF-1) (Cyanothece sp. (strain PCC 8801)).